The sequence spans 170 residues: Peptide deformylase (170 aa).

2 residues coordinate Fe cation: Cys91 and His133. Glu134 is a catalytic residue. Residue His137 participates in Fe cation binding.

This sequence belongs to the polypeptide deformylase family. Fe(2+) serves as cofactor.

The catalysed reaction is N-terminal N-formyl-L-methionyl-[peptide] + H2O = N-terminal L-methionyl-[peptide] + formate. Its function is as follows. Removes the formyl group from the N-terminal Met of newly synthesized proteins. Requires at least a dipeptide for an efficient rate of reaction. N-terminal L-methionine is a prerequisite for activity but the enzyme has broad specificity at other positions. The sequence is that of Peptide deformylase from Histophilus somni (strain 129Pt) (Haemophilus somnus).